The chain runs to 151 residues: Guanylate kinase homolog (151 aa).

The 141-residue stretch at 1–141 (MEREGVDYHY…AYSKLIQILQ (141 aa)) folds into the Guanylate kinase-like domain.

This sequence belongs to the guanylate kinase family.

This Vaccinia virus (strain Copenhagen) (VACV) protein is Guanylate kinase homolog.